The primary structure comprises 130 residues: Iron-sulfur cluster insertion protein ErpA (130 aa).

Iron-sulfur cluster-binding residues include Cys58, Cys122, and Cys124.

Belongs to the HesB/IscA family. In terms of assembly, homodimer. It depends on iron-sulfur cluster as a cofactor.

Functionally, required for insertion of 4Fe-4S clusters for at least IspG. The protein is Iron-sulfur cluster insertion protein ErpA of Stenotrophomonas maltophilia (strain K279a).